The chain runs to 980 residues: Thrombospondin-4 (980 aa).

Positions 1–42 (MTMITPSSKLTLTKGNKSWSSTRCGAFLLLHLVLQPWQRAGA) are cleaved as a signal peptide. Residues 43–210 (QATPQVFDLL…LEELKLVVRG (168 aa)) enclose the Laminin G-like domain. One can recognise an EGF-like 1 domain in the interval 304–343 (PTRRCDSSPCFRGVRCTDTRDGFQCGPCPDGYTGNGITCS). Cystine bridges form between Cys-308/Cys-319, Cys-313/Cys-328, Cys-331/Cys-342, Cys-348/Cys-359, Cys-353/Cys-368, Cys-371/Cys-395, Cys-401/Cys-412, Cys-406/Cys-421, Cys-424/Cys-436, Cys-442/Cys-456, Cys-450/Cys-466, Cys-468/Cys-480, Cys-496/Cys-501, Cys-506/Cys-526, Cys-542/Cys-562, Cys-565/Cys-585, Cys-601/Cys-621, Cys-624/Cys-644, Cys-662/Cys-682, Cys-702/Cys-722, and Cys-738/Cys-959. The 38-residue stretch at 344–381 (DVDECKYHPCYPGVRCTNLAPGFRCDACPVGFTGPMVQ) folds into the EGF-like 2; calcium-binding domain. Positions 397 to 434 (DVDECRNGACVLNSICINTLGSYRCGPCKPGYTGDQTR) constitute an EGF-like 3; calcium-binding domain. The region spanning 438–481 (TERSCRNPEQNPCSVHAQCIEERQGDVTCVCGVGWAGRAGYVCG) is the EGF-like 4 domain. TSP type-3 repeat units follow at residues 482–514 (KDVD…NSGQ), 515–550 (EDAD…NVDQ), 551–573 (RNTD…NNDQ), 574–609 (KDTD…NRDQ), 610–632 (QDRD…NPNQ), 633–670 (SDVD…NSAQ), 671–710 (LDTD…NPAQ), and 711–746 (EDSN…EITL). The disordered stretch occupies residues 596-691 (NILDNCPRVP…CDDDDDNDGM (96 aa)). The segment covering 605 to 615 (PNRDQQDRDGD) has biased composition (basic and acidic residues). The N-linked (GlcNAc...) asparagine glycan is linked to Asn-631. Residues 659–671 (TDNCPTVINSAQL) are compositionally biased toward polar residues. A compositionally biased stretch (acidic residues) spans 679–690 (GDECDDDDDNDG). One can recognise a TSP C-terminal domain in the interval 750-964 (RAYQTVVLDP…LKYRCNDTIP (215 aa)). Residue Asn-960 is glycosylated (N-linked (GlcNAc...) asparagine).

The protein belongs to the thrombospondin family. In terms of assembly, homopentamer; disulfide-linked. Interacts with PTBP3. Interacts (via EGF-like 3; calcium-binding domain) with ATF6 and facilitates its processing, activation and nuclear translocation. Interacts with NOTCH1. As to expression, mainly expressed in astrocytes, and in ressponse to peripheral nerve injury, significantly up-regulated in the dorsal spinal cord (at protein level).

The protein localises to the endoplasmic reticulum. The protein resides in the sarcoplasmic reticulum. Its subcellular location is the secreted. It is found in the extracellular space. It localises to the extracellular matrix. Adhesive glycoprotein that mediates cell-to-cell and cell-to-matrix interactions and is involved in various processes including cellular proliferation, migration, adhesion and attachment, inflammatory response to CNS injury, regulation of vascular inflammation and adaptive responses of the heart to pressure overload and in myocardial function and remodeling. Binds to structural extracellular matrix (ECM) proteins and modulates the ECM in response to tissue damage, contributing to cardioprotective and adaptive ECM remodeling. Plays a role in ER stress response, via its interaction with the activating transcription factor 6 alpha (ATF6) which produces adaptive ER stress response factors and protects myocardium from pressure overload. May contribute to spinal presynaptic hypersensitivity and neuropathic pain states after peripheral nerve injury. May play a role in regulating protective astrogenesis from the subventricular zone (SVZ) niche after injury in a NOTCH1-dependent manner. This is Thrombospondin-4 (Thbs4) from Rattus norvegicus (Rat).